A 352-amino-acid chain; its full sequence is Quinolinate synthase (352 aa).

The iminosuccinate site is built by His-48 and Ser-69. Residue Cys-114 participates in [4Fe-4S] cluster binding. Iminosuccinate is bound by residues 140–142 and Ser-157; that span reads YAN. Residue Cys-201 coordinates [4Fe-4S] cluster. Iminosuccinate contacts are provided by residues 227–229 and Thr-244; that span reads HPE. Cys-298 is a [4Fe-4S] cluster binding site.

This sequence belongs to the quinolinate synthase family. Type 1 subfamily. [4Fe-4S] cluster is required as a cofactor.

It localises to the cytoplasm. It carries out the reaction iminosuccinate + dihydroxyacetone phosphate = quinolinate + phosphate + 2 H2O + H(+). Its pathway is cofactor biosynthesis; NAD(+) biosynthesis; quinolinate from iminoaspartate: step 1/1. Functionally, catalyzes the condensation of iminoaspartate with dihydroxyacetone phosphate to form quinolinate. The protein is Quinolinate synthase of Pseudomonas aeruginosa (strain UCBPP-PA14).